We begin with the raw amino-acid sequence, 359 residues long: MNAPLAGIWPWLPLLWAWLVPEVSSSWWYMRATGTSRVMCDNVPGLVSRQRQLCHRHPDVMRAIGLGVAEWTAECQHQFRQHRWNCDTLDRDHSLFGRLLLRSSRESAFVYAISSAGVVFAITRACSQGELKSCSCDPKKKGTAKDSRGTFDWGGCSDNIDYGVKFARAFVDAKEKKGKDARALMNLHNNRAGRKAVKRFLKQECKCHGVSGSCTLRTCWLAMADFRKTGDYLWRKYNGAIQVVMNQDGTGFTVANKRFKKPTKNDLVYFENSPDYCIRDRDAGSPGTAGRVCNLTSRGMDSCEVMCCGRGYDTSRVTRMTKCECKFHWCCAVRCQDCLEALDVHTCKAPKSADWAVPT.

An N-terminal signal peptide occupies residues 1 to 25 (MNAPLAGIWPWLPLLWAWLVPEVSS). Intrachain disulfides connect Cys75–Cys86, Cys126–Cys134, Cys136–Cys156, Cys205–Cys219, Cys207–Cys214, Cys277–Cys308, Cys293–Cys303, Cys307–Cys347, Cys323–Cys338, Cys325–Cys335, and Cys330–Cys331. Ser211 carries O-palmitoleoyl serine; by PORCN lipidation. Asn294 is a glycosylation site (N-linked (GlcNAc...) asparagine).

This sequence belongs to the Wnt family. In terms of processing, palmitoleoylation is required for efficient binding to frizzled receptors. Depalmitoleoylation leads to Wnt signaling pathway inhibition.

Its subcellular location is the secreted. It is found in the extracellular space. The protein localises to the extracellular matrix. Functionally, ligand for members of the frizzled family of seven transmembrane receptors. Probable developmental protein. May be a signaling molecule which affects the development of discrete regions of tissues. Is likely to signal over only few cell diameters. The protein is Protein Wnt-2 (WNT2) of Echinops telfairi (Lesser hedgehog tenrec).